We begin with the raw amino-acid sequence, 1001 residues long: Serine/threonine-protein kinase TAO1 (1001 aa).

Ser9 bears the Phosphoserine mark. Residues 28 to 281 form the Protein kinase domain; that stretch reads FTDLREIGHG…SEELLKHMFV (254 aa). Residues 34 to 42 and Lys57 each bind ATP; that span reads IGHGSFGAV. Asp151 functions as the Proton acceptor in the catalytic mechanism. 2 disordered regions span residues 324-380 and 404-431; these read PAVE…DKSE and ENYQEEGDPRTRASAPQSPPQVSRHKSH. Positions 350 to 370 are enriched in low complexity; sequence SNQSIPSMSISASSQSSSVNS. 2 positions are modified to phosphoserine: Ser421 and Ser445. Positions 458–651 form a coiled coil; it reads SELREQMSGY…QTQKDLEHAM (194 aa). A disordered region spans residues 567–587; the sequence is KEELNENQSTPKKEKQEWLSK. Positions 577-587 are enriched in basic and acidic residues; it reads PKKEKQEWLSK. A Phosphothreonine modification is found at Thr669. Residues 754–877 adopt a coiled-coil conformation; that stretch reads KAVLKRLKEE…LERQAREIEA (124 aa). Positions 905–1001 are disordered; the sequence is PGASSWSHNP…ISNGSHMSYT (97 aa). Positions 906–915 are enriched in polar residues; it reads GASSWSHNPT. Ser965 carries the phosphoserine modification. Residues 975–1001 are compositionally biased toward polar residues; that stretch reads GGRTEQGMSRSTSVTSQISNGSHMSYT.

Belongs to the protein kinase superfamily. STE Ser/Thr protein kinase family. STE20 subfamily. In terms of assembly, self-associates. Interacts with MAP2K3. Interacts with SPRED1. Interacts with TESK1; the interaction inhibits TAOK1 kinase activity. Interacts with MAP3K7. Proteolytically processed by caspase-3 (CASP3). Post-translationally, autophosphorylated. Phosphorylated by ATM in response to DNA damage. Phosphorylated by LRRK2.

The protein localises to the cytoplasm. The catalysed reaction is L-seryl-[protein] + ATP = O-phospho-L-seryl-[protein] + ADP + H(+). The enzyme catalyses L-threonyl-[protein] + ATP = O-phospho-L-threonyl-[protein] + ADP + H(+). Its activity is regulated as follows. Serine/threonine-protein kinase activity is inhibited by SPRED1. Its function is as follows. Serine/threonine-protein kinase involved in various processes such as p38/MAPK14 stress-activated MAPK cascade, DNA damage response and regulation of cytoskeleton stability. Phosphorylates MAP2K3, MAP2K6 and MARK2. Acts as an activator of the p38/MAPK14 stress-activated MAPK cascade by mediating phosphorylation and subsequent activation of the upstream MAP2K3 and MAP2K6 kinases. Involved in G-protein coupled receptor signaling to p38/MAPK14. In response to DNA damage, involved in the G2/M transition DNA damage checkpoint by activating the p38/MAPK14 stress-activated MAPK cascade, probably by mediating phosphorylation of MAP2K3 and MAP2K6. Acts as a regulator of cytoskeleton stability by phosphorylating 'Thr-208' of MARK2, leading to activate MARK2 kinase activity and subsequent phosphorylation and detachment of MAPT/TAU from microtubules. Also acts as a regulator of apoptosis: regulates apoptotic morphological changes, including cell contraction, membrane blebbing and apoptotic bodies formation via activation of the MAPK8/JNK cascade. During fetal development, it plays an essential role in the regulation of neuronal differentiation and migration to the cortical plate. The protein is Serine/threonine-protein kinase TAO1 (Taok1) of Rattus norvegicus (Rat).